We begin with the raw amino-acid sequence, 159 residues long: Ribosomal RNA large subunit methyltransferase H (159 aa).

S-adenosyl-L-methionine contacts are provided by residues Leu76, Gly108, and Phe127–Leu132.

Belongs to the RNA methyltransferase RlmH family. Homodimer.

The protein localises to the cytoplasm. It catalyses the reaction pseudouridine(1915) in 23S rRNA + S-adenosyl-L-methionine = N(3)-methylpseudouridine(1915) in 23S rRNA + S-adenosyl-L-homocysteine + H(+). In terms of biological role, specifically methylates the pseudouridine at position 1915 (m3Psi1915) in 23S rRNA. This is Ribosomal RNA large subunit methyltransferase H from Streptococcus uberis (strain ATCC BAA-854 / 0140J).